A 414-amino-acid polypeptide reads, in one-letter code: ORC1-type DNA replication protein 1 (414 aa).

Residues 70–74 (TGKTA), Tyr-213, and Arg-225 each bind ATP.

The protein belongs to the CDC6/cdc18 family.

Functionally, involved in regulation of DNA replication. In Methanosarcina mazei (strain ATCC BAA-159 / DSM 3647 / Goe1 / Go1 / JCM 11833 / OCM 88) (Methanosarcina frisia), this protein is ORC1-type DNA replication protein 1 (cdc6-1).